We begin with the raw amino-acid sequence, 734 residues long: Photosystem I P700 chlorophyll a apoprotein A2 (734 aa).

The next 8 helical transmembrane spans lie at 46-69 (IFAS…FHVA), 135-158 (LYTG…LHLQ), 175-199 (LNHH…HVAI), 273-291 (MAHH…GHMY), 330-353 (IHFQ…QHMY), 369-395 (AALY…IFFI), 417-439 (AIIS…LYVH), and 517-535 (FLVH…LILV). [4Fe-4S] cluster is bound by residues cysteine 559 and cysteine 568. 2 helical membrane-spanning segments follow: residues 575-596 (AFYL…YWHW) and 643-665 (LSVW…MFLI). The chlorophyll a site is built by histidine 654, methionine 662, and tyrosine 670. Tryptophan 671 serves as a coordination point for phylloquinone. The helical transmembrane segment at 707–727 (LVGLAHFSVGYIFTYAAFLIA) threads the bilayer.

It belongs to the PsaA/PsaB family. As to quaternary structure, the PsaA/B heterodimer binds the P700 chlorophyll special pair and subsequent electron acceptors. PSI consists of a core antenna complex that captures photons, and an electron transfer chain that converts photonic excitation into a charge separation. The eukaryotic PSI reaction center is composed of at least 11 subunits. The cofactor is P700 is a chlorophyll a/chlorophyll a' dimer, A0 is one or more chlorophyll a, A1 is one or both phylloquinones and FX is a shared 4Fe-4S iron-sulfur center..

The protein resides in the plastid. The protein localises to the chloroplast thylakoid membrane. The catalysed reaction is reduced [plastocyanin] + hnu + oxidized [2Fe-2S]-[ferredoxin] = oxidized [plastocyanin] + reduced [2Fe-2S]-[ferredoxin]. Its function is as follows. PsaA and PsaB bind P700, the primary electron donor of photosystem I (PSI), as well as the electron acceptors A0, A1 and FX. PSI is a plastocyanin-ferredoxin oxidoreductase, converting photonic excitation into a charge separation, which transfers an electron from the donor P700 chlorophyll pair to the spectroscopically characterized acceptors A0, A1, FX, FA and FB in turn. Oxidized P700 is reduced on the lumenal side of the thylakoid membrane by plastocyanin. The sequence is that of Photosystem I P700 chlorophyll a apoprotein A2 from Arabis hirsuta (Hairy rock-cress).